The chain runs to 374 residues: MGLMDTRWETIVPFIVMALMEACTIALTILAKTALTGGMSPFVFIVYTNALGSLLLLPYSFYFHRDESDDEPFLTKPSLVRIFLLGFTGVFLFQNMAFLGLSYSSPIVVCAMGLQSPAFSFLLSLALGKEGGLGWASKRTKGRVIGTLICFTGAFVEVIYLGPFIRPSPPSSPTSNFLTTISHYLTFFKNSDNWALGSLLLACATLSISIWNIIQLDTVQKYPQVMKVVSAYSLAGTLQCAIFSAFMEPDLSAWELKLNMDLYLIIATGIFGSIIRTSVQVKCSKMKGPYYVPLFKPFGILWASIFGTSFFVNSLHYGSVLGAAIAGTGYLLIMWSQVQKDDPNETVEKNDNHQLDSDEQTTPLLLANGDFDQV.

The next 10 membrane-spanning stretches (helical) occupy residues 11 to 31, 42 to 62, 82 to 102, 107 to 127, 145 to 165, 194 to 214, 228 to 248, 255 to 275, 292 to 312, and 315 to 335; these read IVPF…TILA, FVFI…YSFY, IFLL…LGLS, IVVC…SLAL, IGTL…GPFI, WALG…WNII, VVSA…AFME, ELKL…GSII, VPLF…SFFV, and LHYG…LIMW. Residues 26–155 form the EamA domain; sequence ALTILAKTAL…GTLICFTGAF (130 aa).

This sequence belongs to the drug/metabolite transporter (DMT) superfamily. Plant drug/metabolite exporter (P-DME) (TC 2.A.7.4) family.

Its subcellular location is the membrane. The polypeptide is WAT1-related protein At1g60050 (Arabidopsis thaliana (Mouse-ear cress)).